Consider the following 210-residue polypeptide: Proteasome subunit beta (210 aa).

Residues 1–9 (MDNDKYLKG) constitute a propeptide, removed in mature form; by autocatalysis. Thr10 (nucleophile) is an active-site residue.

Belongs to the peptidase T1B family. In terms of assembly, the 20S proteasome core is composed of 14 alpha and 14 beta subunits that assemble into four stacked heptameric rings, resulting in a barrel-shaped structure. The two inner rings, each composed of seven catalytic beta subunits, are sandwiched by two outer rings, each composed of seven alpha subunits. The catalytic chamber with the active sites is on the inside of the barrel. Has a gated structure, the ends of the cylinder being occluded by the N-termini of the alpha-subunits. Is capped at one or both ends by the proteasome regulatory ATPase, PAN.

Its subcellular location is the cytoplasm. The catalysed reaction is Cleavage of peptide bonds with very broad specificity.. With respect to regulation, the formation of the proteasomal ATPase PAN-20S proteasome complex, via the docking of the C-termini of PAN into the intersubunit pockets in the alpha-rings, triggers opening of the gate for substrate entry. Interconversion between the open-gate and close-gate conformations leads to a dynamic regulation of the 20S proteasome proteolysis activity. In terms of biological role, component of the proteasome core, a large protease complex with broad specificity involved in protein degradation. The chain is Proteasome subunit beta from Methanosarcina thermophila.